The chain runs to 399 residues: Aromatic-amino-acid aminotransferase (399 aa).

Gly36, Tyr67, Trp132, and Asn184 together coordinate substrate. Lys247 carries the N6-(pyridoxal phosphate)lysine modification. Arg375 serves as a coordination point for substrate.

It belongs to the class-I pyridoxal-phosphate-dependent aminotransferase family. In terms of assembly, homodimer. Requires pyridoxal 5'-phosphate as cofactor.

It localises to the cytoplasm. It carries out the reaction an aromatic L-alpha-amino acid + 2-oxoglutarate = an aromatic oxo-acid + L-glutamate. In Pseudomonas aeruginosa (strain ATCC 15692 / DSM 22644 / CIP 104116 / JCM 14847 / LMG 12228 / 1C / PRS 101 / PAO1), this protein is Aromatic-amino-acid aminotransferase (phhC).